We begin with the raw amino-acid sequence, 176 residues long: MKEVVAKKYVKALILSLSSDEFDKLGNELKDISNAFLLPKLKVIIDSPDISSKQKADFLFSLLDNASNKIHNFLLLLAERKRLGLIPEISKEFEYQQAVRDCKFSGLISGNFELSAAQKTELEERFSKKFGAKIEFENIKNNYNGIKIELDDLGVEVSFSIDRLKAQMSEYILKAI.

This sequence belongs to the ATPase delta chain family. As to quaternary structure, F-type ATPases have 2 components, F(1) - the catalytic core - and F(0) - the membrane proton channel. F(1) has five subunits: alpha(3), beta(3), gamma(1), delta(1), epsilon(1). F(0) has three main subunits: a(1), b(2) and c(10-14). The alpha and beta chains form an alternating ring which encloses part of the gamma chain. F(1) is attached to F(0) by a central stalk formed by the gamma and epsilon chains, while a peripheral stalk is formed by the delta and b chains.

The protein resides in the cell inner membrane. Its function is as follows. F(1)F(0) ATP synthase produces ATP from ADP in the presence of a proton or sodium gradient. F-type ATPases consist of two structural domains, F(1) containing the extramembraneous catalytic core and F(0) containing the membrane proton channel, linked together by a central stalk and a peripheral stalk. During catalysis, ATP synthesis in the catalytic domain of F(1) is coupled via a rotary mechanism of the central stalk subunits to proton translocation. In terms of biological role, this protein is part of the stalk that links CF(0) to CF(1). It either transmits conformational changes from CF(0) to CF(1) or is implicated in proton conduction. In Campylobacter fetus subsp. fetus (strain 82-40), this protein is ATP synthase subunit delta.